A 352-amino-acid polypeptide reads, in one-letter code: Molybdenum import ATP-binding protein ModC (352 aa).

The ABC transporter domain maps to 1 to 229 (MLELNFSQTL…SVMNPWLPKE (229 aa)). Residue 31–38 (GVSGAGKT) participates in ATP binding. A Mop domain is found at 289 to 352 (QTSIRNVLRA…AQIKSVSITA (64 aa)).

The protein belongs to the ABC transporter superfamily. Molybdate importer (TC 3.A.1.8) family. The complex is composed of two ATP-binding proteins (ModC), two transmembrane proteins (ModB) and a solute-binding protein (ModA).

It is found in the cell inner membrane. The enzyme catalyses molybdate(out) + ATP + H2O = molybdate(in) + ADP + phosphate + H(+). Functionally, part of the ABC transporter complex ModABC involved in molybdenum import. Responsible for energy coupling to the transport system. This chain is Molybdenum import ATP-binding protein ModC, found in Escherichia coli O6:K15:H31 (strain 536 / UPEC).